A 491-amino-acid chain; its full sequence is Nucleoside transporter 1.2 (491 aa).

The next 6 membrane-spanning stretches (helical) occupy residues 27–47 (FYVY…VNAV), 82–102 (YNLI…LSWF), 109–129 (VRLL…MVVP), 136–156 (AGAV…KSIF), 173–193 (STMM…QIIV), and 209–229 (KIYY…LILL). A compositionally biased stretch (basic and acidic residues) spans 261 to 273 (HTDEHPTHDKEGR). Disordered regions lie at residues 261 to 280 (HTDE…SGKE) and 290 to 309 (AAAK…PHEV). N-linked (GlcNAc...) asparagine glycosylation occurs at N274. 5 consecutive transmembrane segments (helical) span residues 333 to 353 (MFVA…GIAV), 361 to 381 (WFST…RFSP), 395 to 415 (WIIV…LLHS), 427 to 447 (VMEV…LVLG), and 460 to 480 (FVAG…GTVL).

Belongs to the SLC29A/ENT transporter (TC 2.A.57) family.

The protein resides in the membrane. The catalysed reaction is adenosine(in) + H(+)(in) = adenosine(out) + H(+)(out). It catalyses the reaction uridine(in) + H(+)(in) = uridine(out) + H(+)(out). Sodium-independent nucleoside:H(+) symporter; transports adenosine with high affinity and uridine with moderate affinity. Can transport cytidine and thymidine. In Leishmania donovani, this protein is Nucleoside transporter 1.2.